The sequence spans 258 residues: 3-deoxy-manno-octulosonate cytidylyltransferase (258 aa).

This sequence belongs to the KdsB family.

Its subcellular location is the cytoplasm. The enzyme catalyses 3-deoxy-alpha-D-manno-oct-2-ulosonate + CTP = CMP-3-deoxy-beta-D-manno-octulosonate + diphosphate. It participates in nucleotide-sugar biosynthesis; CMP-3-deoxy-D-manno-octulosonate biosynthesis; CMP-3-deoxy-D-manno-octulosonate from 3-deoxy-D-manno-octulosonate and CTP: step 1/1. It functions in the pathway bacterial outer membrane biogenesis; lipopolysaccharide biosynthesis. Functionally, activates KDO (a required 8-carbon sugar) for incorporation into bacterial lipopolysaccharide in Gram-negative bacteria. The sequence is that of 3-deoxy-manno-octulosonate cytidylyltransferase from Blochmanniella floridana.